Here is an 807-residue protein sequence, read N- to C-terminus: F-box protein YLR352W (807 aa).

The F-box domain occupies 220-266; sequence LNDCIDLPSHVLWKILKMLPELQKLDLSHTSIDDSTLYHGIPHWKNL. Positions 607 to 616 are enriched in basic and acidic residues; that stretch reads DNNSHVEDSQ. Disordered stretches follow at residues 607-647 and 716-739; these read DNNS…NPFA and HLFESSRSRSGNKTRPSLTGEHSS. Composition is skewed to polar residues over residues 627-644 and 723-736; these read SLLSRPTLRSNNGSSSAN and SRSGNKTRPSLTGE.

Interacts with SKP1 and CDC53. Component of the probable SCF(YBR352W) complex containing CDC53, SKP1, RBX1 and YBR352W.

Its pathway is protein modification; protein ubiquitination. Its function is as follows. Substrate recognition component of a SCF (SKP1-CUL1-F-box protein) E3 ubiquitin-protein ligase complex which mediates the ubiquitination and subsequent proteasomal degradation of target proteins. Probably recognizes and binds to phosphorylated target proteins. This is F-box protein YLR352W from Saccharomyces cerevisiae (strain ATCC 204508 / S288c) (Baker's yeast).